Here is a 241-residue protein sequence, read N- to C-terminus: 3-deoxy-manno-octulosonate cytidylyltransferase (241 aa).

This sequence belongs to the KdsB family.

It localises to the cytoplasm. The catalysed reaction is 3-deoxy-alpha-D-manno-oct-2-ulosonate + CTP = CMP-3-deoxy-beta-D-manno-octulosonate + diphosphate. Its pathway is nucleotide-sugar biosynthesis; CMP-3-deoxy-D-manno-octulosonate biosynthesis; CMP-3-deoxy-D-manno-octulosonate from 3-deoxy-D-manno-octulosonate and CTP: step 1/1. The protein operates within bacterial outer membrane biogenesis; lipopolysaccharide biosynthesis. Functionally, activates KDO (a required 8-carbon sugar) for incorporation into bacterial lipopolysaccharide in Gram-negative bacteria. The chain is 3-deoxy-manno-octulosonate cytidylyltransferase from Rickettsia rickettsii (strain Sheila Smith).